Reading from the N-terminus, the 211-residue chain is Uracil phosphoribosyltransferase (211 aa).

5-phospho-alpha-D-ribose 1-diphosphate-binding positions include R78, R103, and 130–138 (DPMLATGGT). Residues I195 and 200–202 (GDA) each bind uracil. 5-phospho-alpha-D-ribose 1-diphosphate is bound at residue D201.

Belongs to the UPRTase family. Mg(2+) serves as cofactor.

It carries out the reaction UMP + diphosphate = 5-phospho-alpha-D-ribose 1-diphosphate + uracil. The protein operates within pyrimidine metabolism; UMP biosynthesis via salvage pathway; UMP from uracil: step 1/1. Allosterically activated by GTP. Catalyzes the conversion of uracil and 5-phospho-alpha-D-ribose 1-diphosphate (PRPP) to UMP and diphosphate. In Arthrobacter sp. (strain FB24), this protein is Uracil phosphoribosyltransferase.